A 71-amino-acid polypeptide reads, in one-letter code: Large ribosomal subunit protein uL29 (71 aa).

The protein belongs to the universal ribosomal protein uL29 family.

This Rickettsia massiliae (strain Mtu5) protein is Large ribosomal subunit protein uL29.